Reading from the N-terminus, the 629-residue chain is uncharacterized protein (629 aa).

Disordered stretches follow at residues 101 to 126, 172 to 209, 315 to 339, and 448 to 468; these read SWKK…TPPT, PQKD…EEED, STPK…NSQR, and GENT…SEEP. The segment covering 200-209 has biased composition (acidic residues); that stretch reads TEEEEEEEED. Ser-334 bears the Phosphoserine mark. Over residues 448 to 463 the composition is skewed to polar residues; the sequence is GENTANNGYGPQTLNE.

This is an uncharacterized protein from Schizosaccharomyces pombe (strain 972 / ATCC 24843) (Fission yeast).